The primary structure comprises 371 residues: UDP-N-acetylglucosamine--N-acetylmuramyl-(pentapeptide) pyrophosphoryl-undecaprenol N-acetylglucosamine transferase (371 aa).

Residues 10-12, Asn124, Arg165, Ser191, Ile246, and Gln291 each bind UDP-N-acetyl-alpha-D-glucosamine; that span reads TGG.

This sequence belongs to the glycosyltransferase 28 family. MurG subfamily.

The protein localises to the cell inner membrane. It catalyses the reaction di-trans,octa-cis-undecaprenyl diphospho-N-acetyl-alpha-D-muramoyl-L-alanyl-D-glutamyl-meso-2,6-diaminopimeloyl-D-alanyl-D-alanine + UDP-N-acetyl-alpha-D-glucosamine = di-trans,octa-cis-undecaprenyl diphospho-[N-acetyl-alpha-D-glucosaminyl-(1-&gt;4)]-N-acetyl-alpha-D-muramoyl-L-alanyl-D-glutamyl-meso-2,6-diaminopimeloyl-D-alanyl-D-alanine + UDP + H(+). It functions in the pathway cell wall biogenesis; peptidoglycan biosynthesis. In terms of biological role, cell wall formation. Catalyzes the transfer of a GlcNAc subunit on undecaprenyl-pyrophosphoryl-MurNAc-pentapeptide (lipid intermediate I) to form undecaprenyl-pyrophosphoryl-MurNAc-(pentapeptide)GlcNAc (lipid intermediate II). This Geobacter sp. (strain M21) protein is UDP-N-acetylglucosamine--N-acetylmuramyl-(pentapeptide) pyrophosphoryl-undecaprenol N-acetylglucosamine transferase.